Here is a 376-residue protein sequence, read N- to C-terminus: uncharacterized protein (376 aa).

Topologically, residues 1-280 (MPIPIIAHIA…RTPGFRRVVS (280 aa)) are lumenal. NADP(+)-binding residues include I66, D115, R178, K233, V270, and T272. Catalysis depends on K233, which acts as the Lowers pKa of active site Tyr. The helical transmembrane segment at 281–301 (FGKVWGLFLYLLLWPFWWLLL) threads the bilayer. Residues 302 to 376 (KGTIHGAQSF…KKKKIKKSKK (75 aa)) lie on the Cytoplasmic side of the membrane.

Belongs to the short-chain dehydrogenases/reductases (SDR) family.

The protein resides in the cytoplasm. The protein localises to the endoplasmic reticulum membrane. In terms of biological role, may be involved in lipid metabolism. This is an uncharacterized protein from Schizosaccharomyces pombe (strain 972 / ATCC 24843) (Fission yeast).